The following is a 1021-amino-acid chain: Replication factor C subunit 1 (1021 aa).

Disordered stretches follow at residues 1 to 259 and 339 to 392; these read MSSD…EGAP and PAKA…GSAS. Over residues 90 to 110 the composition is skewed to basic and acidic residues; sequence KVSDELEDDMKPLPAKEVHKE. Residues 123–138 show a composition bias toward basic residues; that stretch reads SKRKTPVKPPPSKKLK. Over residues 197 to 207 the composition is skewed to acidic residues; it reads LDDDGEEDKMD. Residues 219–236 are compositionally biased toward gly residues; sequence RGRGGASGGRGRGGGGRG. 2 stretches are compositionally biased toward basic and acidic residues: residues 241 to 255 and 347 to 357; these read GERKDPPHKGEKEVP and HQSDKNSEKQQ. A BRCT domain is found at 257-347; that stretch reads GAPDCLTGLT…KPAKATVAKH (91 aa). A compositionally biased stretch (polar residues) spans 374–392; that stretch reads NQITTGKNISPKSNKGSAS. ATP is bound at residue 465-472; it reads SGPPGIGK. Residues 931 to 1021 are disordered; sequence VGESLPEENG…AGGSGGKRKR (91 aa). Residues 945-958 are compositionally biased toward acidic residues; the sequence is EGDEEDSSDAENND. Basic and acidic residues predominate over residues 965–977; sequence TKPKLDLQSDKKK. The segment covering 999-1010 has biased composition (low complexity); sequence AGRSKASGSAGK. Over residues 1011–1021 the composition is skewed to gly residues; the sequence is AAGGSGGKRKR.

The protein belongs to the activator 1 large subunit family. As to quaternary structure, heterotetramer of subunits RFC2, RFC3, RFC4 and RFC5 that can form a complex with RFC1. In terms of tissue distribution, expressed in roots, leaves, shoot apical meristem (SAM), flag leaves and panicles.

It is found in the nucleus. May be involved in DNA replication and thus regulate cell proliferation. The polypeptide is Replication factor C subunit 1 (RFC1) (Oryza sativa subsp. japonica (Rice)).